The chain runs to 246 residues: Pyridoxine 5'-phosphate synthase (246 aa).

Residue asparagine 6 participates in 3-amino-2-oxopropyl phosphate binding. Residue 8–9 coordinates 1-deoxy-D-xylulose 5-phosphate; that stretch reads DH. Arginine 17 provides a ligand contact to 3-amino-2-oxopropyl phosphate. Histidine 49 (proton acceptor) is an active-site residue. 1-deoxy-D-xylulose 5-phosphate contacts are provided by arginine 51 and histidine 56. Glutamate 76 acts as the Proton acceptor in catalysis. Position 106 (threonine 106) interacts with 1-deoxy-D-xylulose 5-phosphate. Catalysis depends on histidine 196, which acts as the Proton donor. 3-amino-2-oxopropyl phosphate-binding positions include glycine 197 and 219-220; that span reads GH.

The protein belongs to the PNP synthase family. As to quaternary structure, homooctamer; tetramer of dimers.

The protein resides in the cytoplasm. It catalyses the reaction 3-amino-2-oxopropyl phosphate + 1-deoxy-D-xylulose 5-phosphate = pyridoxine 5'-phosphate + phosphate + 2 H2O + H(+). The protein operates within cofactor biosynthesis; pyridoxine 5'-phosphate biosynthesis; pyridoxine 5'-phosphate from D-erythrose 4-phosphate: step 5/5. Functionally, catalyzes the complicated ring closure reaction between the two acyclic compounds 1-deoxy-D-xylulose-5-phosphate (DXP) and 3-amino-2-oxopropyl phosphate (1-amino-acetone-3-phosphate or AAP) to form pyridoxine 5'-phosphate (PNP) and inorganic phosphate. The sequence is that of Pyridoxine 5'-phosphate synthase from Akkermansia muciniphila (strain ATCC BAA-835 / DSM 22959 / JCM 33894 / BCRC 81048 / CCUG 64013 / CIP 107961 / Muc).